Reading from the N-terminus, the 667-residue chain is Transcription factor 4 (667 aa).

An essential for MYOD1 inhibition region spans residues 1–83 (MHHQQRMAAL…GTPYDHMTSR (83 aa)). Residues 18-26 (DLLDFSAMF) carry the 9aaTAD motif. Disordered regions lie at residues 24–245 (AMFS…LGNS), 263–321 (LSYP…SQTG), 336–379 (HTNN…EGPL), 466–570 (SLLP…MANN), and 634–667 (KRRE…MGQM). Residues 29 to 49 (PVSSGKNGPTSLASGHFTGSN) are compositionally biased toward polar residues. S66, S87, and S92 each carry phosphoserine. Polar residues-rich tracts occupy residues 107–126 (GSYS…QQSL), 137–155 (GTLS…SSNN), 205–216 (KPATSTFPSSFF), and 266–306 (PSHS…TDSI). The span at 337 to 348 (TNNSFSSNPSTP) shows a compositional bias: low complexity. The segment covering 365–374 (NGGQASSSPN) has biased composition (polar residues). S372 carries the phosphoserine modification. Residues 379–400 (LHSLQSRIEDRLERLDDAIHVL) are leucine-zipper. Low complexity-rich tracts occupy residues 467–480 (LLPN…LPVQ) and 503–512 (GQSVSSGSSE). Residue S515 is modified to Phosphoserine. 2 stretches are compositionally biased toward basic and acidic residues: residues 527 to 542 (KSSE…KDIK) and 555 to 570 (PEQK…MANN). The region spanning 564–617 (ERRMANNARERLRVRDINEAFKELGRMVQLHLKSDKPQTKLLILHQAVAVILSL) is the bHLH domain. A class A specific domain region spans residues 619–642 (QQVRERNLNPKAACLKRREEEKVS).

As to quaternary structure, efficient DNA binding requires dimerization with another bHLH protein. Forms homo- or heterooligomers with myogenin. Interacts with HIVEP2. Interacts with NEUROD2. Interacts with AGBL1. Interacts with BHLHA9. In terms of tissue distribution, expressed in adult heart, brain, placenta, skeletal muscle and to a lesser extent in the lung. In developing embryonic tissues, expression mostly occurs in the brain.

It is found in the nucleus. In terms of biological role, transcription factor that binds to the immunoglobulin enhancer Mu-E5/KE5-motif. Involved in the initiation of neuronal differentiation. Activates transcription by binding to the E box (5'-CANNTG-3'). Binds to the E-box present in the somatostatin receptor 2 initiator element (SSTR2-INR) to activate transcription. Preferentially binds to either 5'-ACANNTGT-3' or 5'-CCANNTGG-3'. This chain is Transcription factor 4 (TCF4), found in Homo sapiens (Human).